Reading from the N-terminus, the 342-residue chain is S-adenosylmethionine:tRNA ribosyltransferase-isomerase (342 aa).

The protein belongs to the QueA family. In terms of assembly, monomer.

The protein resides in the cytoplasm. It catalyses the reaction 7-aminomethyl-7-carbaguanosine(34) in tRNA + S-adenosyl-L-methionine = epoxyqueuosine(34) in tRNA + adenine + L-methionine + 2 H(+). Its pathway is tRNA modification; tRNA-queuosine biosynthesis. In terms of biological role, transfers and isomerizes the ribose moiety from AdoMet to the 7-aminomethyl group of 7-deazaguanine (preQ1-tRNA) to give epoxyqueuosine (oQ-tRNA). The protein is S-adenosylmethionine:tRNA ribosyltransferase-isomerase of Streptococcus pneumoniae serotype 4 (strain ATCC BAA-334 / TIGR4).